Reading from the N-terminus, the 209-residue chain is Large ribosomal subunit protein uL3 (209 aa).

The interval 121–154 (GGIKRHNFHRGPMAHGSKYHRRPGSSAAKGPART) is disordered.

Belongs to the universal ribosomal protein uL3 family. In terms of assembly, part of the 50S ribosomal subunit. Forms a cluster with proteins L14 and L19.

Its function is as follows. One of the primary rRNA binding proteins, it binds directly near the 3'-end of the 23S rRNA, where it nucleates assembly of the 50S subunit. This is Large ribosomal subunit protein uL3 from Desulforamulus reducens (strain ATCC BAA-1160 / DSM 100696 / MI-1) (Desulfotomaculum reducens).